The primary structure comprises 79 residues: Centromere protein X (79 aa).

An N-acetylmethionine modification is found at Met1.

The protein belongs to the CENP-X/MHF2 family. In terms of assembly, heterodimer with CENPX, sometimes called MHF; this interaction stabilizes both partners. MHF heterodimers can assemble to form tetrameric structures. MHF also coassemble with CENPT-CENPW heterodimers at centromeres to form the tetrameric CENP-T-W-S-X complex. Forms a discrete complex with FANCM and CENPX, called FANCM-MHF; this interaction, probably mediated by direct binding between CENPS and FANCM, leads to synergistic activation of double-stranded DNA binding and strongly stimulates FANCM-mediated DNA remodeling. Recruited by FANCM to the Fanconi anemia (FA) core complex, which consists of CENPS, CENPX, FANCA, FANCB, FANCC, FANCE, FANCF, FANCG, FANCL, FANCM, FAAP24 and FAAP100. The FA core complex associates with Bloom syndrome (BLM) complex, which consists of at least BLM, DNA topoisomerase 3-alpha (TOP3A), RMI1/BLAP75, RPA1/RPA70 and RPA2/RPA32. The super complex between FA and BLM is called BRAFT.

The protein localises to the nucleus. Its subcellular location is the chromosome. It is found in the centromere. It localises to the kinetochore. DNA-binding component of the Fanconi anemia (FA) core complex. Required for the normal activation of the FA pathway, leading to monoubiquitination of the FANCI-FANCD2 complex in response to DNA damage, cellular resistance to DNA cross-linking drugs, and prevention of chromosomal breakage. In complex with CENPS (MHF heterodimer), crucial cofactor for FANCM in both binding and ATP-dependent remodeling of DNA. Stabilizes FANCM. In complex with CENPS and FANCM (but not other FANC proteins), rapidly recruited to blocked forks and promotes gene conversion at blocked replication forks. In complex with CENPS, CENPT and CENPW (CENP-T-W-S-X heterotetramer), involved in the formation of a functional kinetochore outer plate, which is essential for kinetochore-microtubule attachment and faithful mitotic progression. As a component of MHF and CENP-T-W-S-X complexes, binds DNA and bends it to form a nucleosome-like structure. DNA-binding function is fulfilled in the presence of CENPS, with the following preference for DNA substates: Holliday junction &gt; double-stranded &gt; splay arm &gt; single-stranded. Does not bind DNA on its own. The chain is Centromere protein X (CENPX) from Bos taurus (Bovine).